Consider the following 1822-residue polypeptide: CDK5 regulatory subunit-associated protein 2 (1822 aa).

The segment at lysine 50 to glycine 93 is CM1 motif; interacts with the gTuRC. The tract at residues arginine 57–glutamate 195 is interaction with NCKAP5L. 2 positions are modified to phosphoserine: serine 485 and serine 544. The interval phenylalanine 1022–serine 1046 is disordered. Position 1195 is a phosphothreonine (threonine 1195). Positions glycine 1201–serine 1822 are interaction with PCNT and AKAP9. A phosphoserine mark is found at serine 1243 and serine 1245. Residues tyrosine 1350–proline 1391 form a disordered region. A compositionally biased stretch (basic and acidic residues) spans serine 1372–lysine 1389. Phosphoserine is present on residues serine 1497, serine 1592, and serine 1595. The tract at residues histidine 1655–proline 1697 is interaction with CDK5R1. The required for centrosomal attachment, Golgi targeting and CALM1 interaction stretch occupies residues histidine 1655 to serine 1822. Positions leucine 1688–serine 1822 are interaction with PCNT. A required for centrosomal attachment, Golgi localization and CALM1 interaction region spans residues valine 1790–alanine 1799. A Phosphoserine modification is found at serine 1822.

In terms of assembly, homodimer. Interacts with CDK5R1 (p35 form). CDK5RAP1, CDK5RAP2 and CDK5RAP3 show competitive binding to CDK5R1. May form a complex with CDK5R1 and CDK5. Interacts with pericentrin/PCNT; the interaction is leading to centrosomal and Golgi localization of CDK5RAP2 and PCNT. Interacts with AKAP9; the interaction targets CDK5RAP2 and AKAP9 to Golgi apparatus. Interacts with TUBG1; the interaction is leading to the centrosomal localization of CDK5RAP2 and TUBG1. Interacts with TUBGCP3. Interacts with CALM1. Interacts with CDC20. Interacts with CEP68; degradation of CEP68 in early mitosis leads to removal of CDK5RAP2 from the centrosome which promotes centriole disengagement and subsequent centriole separation. Interacts with NCKAP5L. Interacts with LGALS3BP; this interaction may connect the pericentrosomal complex to the gamma-tubulin ring complex (gTuRC) to promote microtubule assembly and acetylation. Contrary to human, chimpanzee, bovine and dog orthologous proteins, does not interact with EB1/MAPRE1, possibly due to a divergence at the level of the critical residue 939, which is a proline in MAPRE1-binding orthologs and a leucine in mouse and rat. Interacts with CCDC66. Associates (via CM1 motif) with TUBGCP2 of the gTuRC; the interaction plays a role in gTuRC activation. In terms of processing, phosphorylated in vitro by CDK5. In terms of tissue distribution, expressed in testis, thymus, heart and brain.

Its subcellular location is the cytoplasm. It is found in the cytoskeleton. The protein localises to the microtubule organizing center. It localises to the centrosome. The protein resides in the golgi apparatus. Potential regulator of CDK5 activity via its interaction with CDK5R1. Negative regulator of centriole disengagement (licensing) which maintains centriole engagement and cohesion. Involved in regulation of mitotic spindle orientation. Plays a role in the spindle checkpoint activation by acting as a transcriptional regulator of both BUBR1 and MAD2 promoter. Together with EB1/MAPRE1, may promote microtubule polymerization, bundle formation, growth and dynamics at the plus ends. Regulates centrosomal maturation by recruitment of the gamma-tubulin ring complex (gTuRC) onto centrosomes. Required for the recruitment of AKAP9 to centrosomes. Plays a role in neurogenesis. Contrary to higher mammalian orthologs, including human, chimpanzee, bovine and dog, does not interact with EB1/MAPRE1, therefore its function in the regulation of microtubule dynamics is unclear. In Mus musculus (Mouse), this protein is CDK5 regulatory subunit-associated protein 2 (Cdk5rap2).